The sequence spans 249 residues: Flavin-dependent thymidylate synthase (249 aa).

The 229-residue stretch at 7–235 (LDVQLIAATA…PVLFDDFHIT (229 aa)) folds into the ThyX domain. DUMP-binding positions include 94 to 97 (ELVR), 105 to 109 (QLSQR), and Arg174. FAD-binding positions include 97 to 99 (RHR) and Gln105. A ThyX motif motif is present at residues 97–107 (RHRHFSFSQLS). FAD-binding positions include 190 to 192 (NYR) and His196. Residue Arg201 participates in dUMP binding. Catalysis depends on Arg201, which acts as the Involved in ionization of N3 of dUMP, leading to its activation.

Belongs to the thymidylate synthase ThyX family. Homotetramer. FAD is required as a cofactor.

It catalyses the reaction dUMP + (6R)-5,10-methylene-5,6,7,8-tetrahydrofolate + NADPH + H(+) = dTMP + (6S)-5,6,7,8-tetrahydrofolate + NADP(+). Its pathway is pyrimidine metabolism; dTTP biosynthesis. In terms of biological role, catalyzes the reductive methylation of 2'-deoxyuridine-5'-monophosphate (dUMP) to 2'-deoxythymidine-5'-monophosphate (dTMP) while utilizing 5,10-methylenetetrahydrofolate (mTHF) as the methyl donor, and NADPH and FADH(2) as the reductant. The sequence is that of Flavin-dependent thymidylate synthase from Corynebacterium aurimucosum (strain ATCC 700975 / DSM 44827 / CIP 107346 / CN-1) (Corynebacterium nigricans).